The sequence spans 593 residues: Cytochrome c oxidase polypeptide 1 (593 aa).

The next 2 helical transmembrane spans lie at 5–25 (ASSI…VAVL) and 71–91 (IGIL…VSVL). Residue His-117 participates in Fe(II)-heme a binding. The next 6 helical transmembrane spans lie at 122 to 142 (LFLF…PLLI), 154 to 174 (AIAF…FLIP), 204 to 224 (GLHL…ATIF), 246 to 266 (QSGL…MLLL), 288 to 308 (LFWF…MGIV), and 320 to 340 (LFGF…SFGV). His-294 and Tyr-298 together coordinate Cu cation. The segment at residues 294–298 (HPEVY) is a cross-link (1'-histidyl-3'-tyrosine (His-Tyr)). Positions 343 and 344 each coordinate Cu cation. Transmembrane regions (helical) follow at residues 358 to 378 (FMAV…NWIT), 401 to 421 (FIIG…LILH), 425 to 445 (YVVG…LFAA), 467 to 487 (FWTA…LGYG), and 506 to 526 (LATV…FNMA). His-429 is a heme a3 binding site. His-431 is a binding site for Fe(II)-heme a. Residues 562 to 593 (TTVLPDGGDEAQSEADAVTDGGQPAADSDTES) are disordered.

The protein belongs to the heme-copper respiratory oxidase family.

The protein resides in the cell membrane. It catalyses the reaction 4 Fe(II)-[cytochrome c] + O2 + 8 H(+)(in) = 4 Fe(III)-[cytochrome c] + 2 H2O + 4 H(+)(out). The protein operates within energy metabolism; oxidative phosphorylation. In terms of biological role, cytochrome c oxidase is the component of the respiratory chain that catalyzes the reduction of oxygen to water. Subunits 1-3 form the functional core of the enzyme complex. CO I is the catalytic subunit of the enzyme. Electrons originating in cytochrome c are transferred via the copper A center of subunit 2 and heme A of subunit 1 to the bimetallic center formed by heme A3 and copper B. This chain is Cytochrome c oxidase polypeptide 1 (coxA2), found in Halobacterium salinarum (strain ATCC 700922 / JCM 11081 / NRC-1) (Halobacterium halobium).